A 348-amino-acid polypeptide reads, in one-letter code: L-threonine 3-dehydrogenase (348 aa).

Position 42 (Cys-42) interacts with Zn(2+). Residues Thr-44 and His-47 each act as charge relay system in the active site. Residues His-67, Glu-68, Cys-97, Cys-100, Cys-103, and Cys-111 each coordinate Zn(2+). NAD(+) contacts are provided by residues Leu-179, Glu-199, Arg-204, 266-268 (LGL), and 291-292 (IT).

Belongs to the zinc-containing alcohol dehydrogenase family. As to quaternary structure, homodimer. Homotetramer; dimer of dimers. The cofactor is Zn(2+).

The protein localises to the cytoplasm. The enzyme catalyses L-threonine + NAD(+) = (2S)-2-amino-3-oxobutanoate + NADH + H(+). The protein operates within amino-acid degradation; L-threonine degradation via oxydo-reductase pathway; glycine from L-threonine: step 1/2. Is totally inhibited by EDTA in vitro. In terms of biological role, catalyzes the NAD(+)-dependent oxidation of L-threonine to 2-amino-3-ketobutyrate. Is much less efficient when using NADP(+) instead of NAD(+). To a lesser extent, also catalyzes the oxidation of L-serine and DL-threo-3-phenylserine, but not that of L-allo-threonine, D-threonine and D-allo-threonine and many other L-amino acids. The polypeptide is L-threonine 3-dehydrogenase (Pyrococcus horikoshii (strain ATCC 700860 / DSM 12428 / JCM 9974 / NBRC 100139 / OT-3)).